We begin with the raw amino-acid sequence, 540 residues long: MIITNTIIIILIISPSFCQIDITKLQRVGVLVNNPKGMKISQNFETRYLILSLIPKIENSHSCGDQQINQYKKLLDRLIIPLYDGLKLQKDVIVVSHETNNNTNSRTKRFFGEIIGTIAIGIATSAQITAAVALVEAKQAKSDIEKLKEAIRDTNKAVQSIQSSVGNLIVAVKSVQDYVNNEIVPSITRLGCEAAGLKLGIALTQHYSELTNIFGDNIGTLKEKGIKLQGIASLYHTNITEIFTTSTVDQYDIYDLLFTESIKMRVIDVDLSDYSITLQVRLPLLTKISNTQIYKVDSISYNIQGKEWYIPLPNHIMTKGAFLGGADIKECIEAFSSYICPSDPGFTLNHEIENCLSGNITQCPKTIVTSDVVPRYAFVNGGLIANCITTTCTCNGVDNRINQSPDQGIKIITHKECQVIGINGMLFSTNREGTLATYTFDDIILNNSVALNPIDISMELNKAKLELEESKEWIKKSNQKLDSVGSWYQSSATITIIIVMIVVLFIINITIIVVIIRHHRIQGKNQNDKNSEPYVLTSRQ.

A signal peptide spans 1–18 (MIITNTIIIILIISPSFC). The Extracellular segment spans residues 19-495 (QIDITKLQRV…SWYQSSATIT (477 aa)). The cysteines at positions 63 and 192 are disulfide-linked. N-linked (GlcNAc...) asparagine; by host glycosylation is present at asparagine 101. Residues 110–134 (FFGEIIGTIAIGIATSAQITAAVAL) form a fusion peptide region. Positions 135 to 163 (VEAKQAKSDIEKLKEAIRDTNKAVQSIQS) form a coiled coil. An N-linked (GlcNAc...) asparagine; by host glycan is attached at asparagine 238. 4 disulfide bridges follow: cysteine 331/cysteine 340, cysteine 355/cysteine 363, cysteine 387/cysteine 392, and cysteine 394/cysteine 417. A glycan (N-linked (GlcNAc...) asparagine; by host) is linked at asparagine 359. Asparagine 446 carries N-linked (GlcNAc...) asparagine; by host glycosylation. Residues 459-484 (ELNKAKLELEESKEWIKKSNQKLDSV) adopt a coiled-coil conformation. A helical membrane pass occupies residues 496–516 (IIIVMIVVLFIINITIIVVII). The Cytoplasmic portion of the chain corresponds to 517–540 (RHHRIQGKNQNDKNSEPYVLTSRQ).

This sequence belongs to the paramyxoviruses fusion glycoprotein family. In terms of assembly, homotrimer of disulfide-linked F1-F2. The inactive precursor F0 is glycosylated and proteolytically cleaved into F1 and F2 to be functionally active. The cleavage is mediated by cellular proteases during the transport and maturation of the polypeptide.

It is found in the virion membrane. Its subcellular location is the host cell membrane. Class I viral fusion protein. Under the current model, the protein has at least 3 conformational states: pre-fusion native state, pre-hairpin intermediate state, and post-fusion hairpin state. During viral and plasma cell membrane fusion, the heptad repeat (HR) regions assume a trimer-of-hairpins structure, positioning the fusion peptide in close proximity to the C-terminal region of the ectodomain. The formation of this structure appears to drive apposition and subsequent fusion of viral and plasma cell membranes. Directs fusion of viral and cellular membranes leading to delivery of the nucleocapsid into the cytoplasm. This fusion is pH independent and occurs directly at the outer cell membrane. The trimer of F1-F2 (F protein) probably interacts with HN at the virion surface. Upon HN binding to its cellular receptor, the hydrophobic fusion peptide is unmasked and interacts with the cellular membrane, inducing the fusion between cell and virion membranes. Later in infection, F proteins expressed at the plasma membrane of infected cells could mediate fusion with adjacent cells to form syncytia, a cytopathic effect that could lead to tissue necrosis. The protein is Fusion glycoprotein F0 (F) of Bos taurus (Bovine).